Consider the following 336-residue polypeptide: Carbamoyl dehydratase HypE (336 aa).

The residue at position 336 (cysteine 336) is an S-carbamoylcysteine; by HypF; alternate. An S-cyanocysteine; by autocatalysis; alternate modification is found at cysteine 336.

Belongs to the HypE family. In terms of assembly, homodimer. Forms a complex with HypF. Also forms a complex with HypC, or HybG, and HypD. Post-translationally, modified by HypF, which adds a carboxamido group to the thiolate of the C-terminal cysteine, yielding a protein-S-carboxamide. The carboxamido group is then dehydrated by HypE itself to yield a protein-thiocyanate.

It catalyses the reaction C-terminal S-carboxamide-L-cysteinyl-[HypE protein] + ATP = C-terminal S-cyanate-L-cysteinyl-[HypE protein] + ADP + phosphate + H(+). It participates in protein modification; [NiFe] hydrogenase maturation. In terms of biological role, involved in the maturation of [NiFe] hydrogenases. Along with HypF, it catalyzes the synthesis of the CN ligands of the active site iron of [NiFe]-hydrogenases. HypE catalyzes the ATP-dependent dehydration of the carboxamido group attached to its C-terminal cysteine to a cyano group. The cyano group is then transferred from HypE to the HypC-HypD complex or the HybG-HypD complex. The chain is Carbamoyl dehydratase HypE from Escherichia coli (strain K12).